Consider the following 165-residue polypeptide: Transcription elongation factor GreA (165 aa).

Positions 55-78 (AAKEEQGKQELRVRQLTQLLESAK) form a coiled coil.

This sequence belongs to the GreA/GreB family.

Functionally, necessary for efficient RNA polymerase transcription elongation past template-encoded arresting sites. The arresting sites in DNA have the property of trapping a certain fraction of elongating RNA polymerases that pass through, resulting in locked ternary complexes. Cleavage of the nascent transcript by cleavage factors such as GreA or GreB allows the resumption of elongation from the new 3'terminus. GreA releases sequences of 2 to 3 nucleotides. This is Transcription elongation factor GreA from Streptomyces coelicolor (strain ATCC BAA-471 / A3(2) / M145).